Here is a 249-residue protein sequence, read N- to C-terminus: MDEERSSMLPTMAAGPNSILFAINIDNKDLNGQSKFAPTVSDLLKESTQNVTLLKESTQGVSSVFREITASSAISILIKPEQETDPLPVVSRNVSADAKCKKERKKKKQVTNIISFDDEEDEQNSGDMFKKTPGAGESSEDNSDHSSVNIMSAFESPFGPNSNGSQSSNSWKIDSLSLNREFGYQKLDVKSIDDEDVDENEDDVYGNSSGRKHRGHSESPEKNGAHSVTQAGVQWHDLSSLQPLPPGFK.

Disordered regions lie at residues 109–171 (QVTN…SNSW) and 188–249 (DVKS…PGFK). Residues 156 to 170 (SPFGPNSNGSQSSNS) show a composition bias toward low complexity. Over residues 193-204 (DDEDVDENEDDV) the composition is skewed to acidic residues. Over residues 226–242 (HSVTQAGVQWHDLSSLQ) the composition is skewed to polar residues.

This sequence belongs to the sorting nexin family.

The sequence is that of Putative protein SNX29P2 (SNX29P2) from Homo sapiens (Human).